The sequence spans 270 residues: Putative pyruvate, phosphate dikinase regulatory protein (270 aa).

151–158 (GVSRTSKT) lines the ADP pocket.

Belongs to the pyruvate, phosphate/water dikinase regulatory protein family. PDRP subfamily.

The enzyme catalyses N(tele)-phospho-L-histidyl/L-threonyl-[pyruvate, phosphate dikinase] + ADP = N(tele)-phospho-L-histidyl/O-phospho-L-threonyl-[pyruvate, phosphate dikinase] + AMP + H(+). The catalysed reaction is N(tele)-phospho-L-histidyl/O-phospho-L-threonyl-[pyruvate, phosphate dikinase] + phosphate + H(+) = N(tele)-phospho-L-histidyl/L-threonyl-[pyruvate, phosphate dikinase] + diphosphate. Its function is as follows. Bifunctional serine/threonine kinase and phosphorylase involved in the regulation of the pyruvate, phosphate dikinase (PPDK) by catalyzing its phosphorylation/dephosphorylation. In Streptococcus gordonii (strain Challis / ATCC 35105 / BCRC 15272 / CH1 / DL1 / V288), this protein is Putative pyruvate, phosphate dikinase regulatory protein.